Consider the following 432-residue polypeptide: Phosphomethylpyrimidine synthase (432 aa).

Residues Asn66, Met95, Tyr124, His163, 185–187, 226–229, and Glu265 contribute to the substrate site; these read SRG and DGLR. His269 contacts Zn(2+). Tyr292 is a substrate binding site. Residue His333 participates in Zn(2+) binding. 3 residues coordinate [4Fe-4S] cluster: Cys409, Cys412, and Cys416.

This sequence belongs to the ThiC family. It depends on [4Fe-4S] cluster as a cofactor.

It catalyses the reaction 5-amino-1-(5-phospho-beta-D-ribosyl)imidazole + S-adenosyl-L-methionine = 4-amino-2-methyl-5-(phosphooxymethyl)pyrimidine + CO + 5'-deoxyadenosine + formate + L-methionine + 3 H(+). The protein operates within cofactor biosynthesis; thiamine diphosphate biosynthesis. Its function is as follows. Catalyzes the synthesis of the hydroxymethylpyrimidine phosphate (HMP-P) moiety of thiamine from aminoimidazole ribotide (AIR) in a radical S-adenosyl-L-methionine (SAM)-dependent reaction. The protein is Phosphomethylpyrimidine synthase of Caldanaerobacter subterraneus subsp. tengcongensis (strain DSM 15242 / JCM 11007 / NBRC 100824 / MB4) (Thermoanaerobacter tengcongensis).